Reading from the N-terminus, the 563-residue chain is NAD(P)H-quinone oxidoreductase chain 4 (563 aa).

The next 15 membrane-spanning stretches (helical) occupy residues 25–45, 56–76, 90–110, 111–131, 133–153, 157–177, 189–209, 230–250, 264–284, 298–318, 335–355, 356–376, 397–417, 438–458, and 485–505; these read FPWL…VPFI, WFAL…YLYG, VSWL…ISMP, LILL…PVTF, PKLF…VFAV, LLFF…LAIW, FIIY…AMGF, GFQL…LPIV, TAPV…YALM, FAPL…LTSF, MGFV…GAML, QMIS…ATYD, FALW…SGFV, IVIA…LLSM, and VYII…PRLM.

Belongs to the complex I subunit 4 family.

The protein localises to the cellular thylakoid membrane. It carries out the reaction a plastoquinone + NADH + (n+1) H(+)(in) = a plastoquinol + NAD(+) + n H(+)(out). The enzyme catalyses a plastoquinone + NADPH + (n+1) H(+)(in) = a plastoquinol + NADP(+) + n H(+)(out). In terms of biological role, NDH-1 shuttles electrons from NAD(P)H, via FMN and iron-sulfur (Fe-S) centers, to quinones in the respiratory chain. The immediate electron acceptor for the enzyme in this species is believed to be plastoquinone. Couples the redox reaction to proton translocation (for every two electrons transferred, four hydrogen ions are translocated across the cytoplasmic membrane), and thus conserves the redox energy in a proton gradient. The protein is NAD(P)H-quinone oxidoreductase chain 4 of Prochlorococcus marinus (strain MIT 9313).